A 576-amino-acid polypeptide reads, in one-letter code: Gamma-aminobutyric acid receptor subunit beta (576 aa).

The signal sequence occupies residues 1–29 (MSDSMLYQTLQTCLPKSRLITLWLAFTLA). The Extracellular segment spans residues 30 to 268 (MLIQEPRRHA…IQFVRSMGYY (239 aa)). A glycan (N-linked (GlcNAc...) asparagine) is linked at asparagine 56. A disulfide bridge connects residues cysteine 183 and cysteine 197. N-linked (GlcNAc...) asparagine glycosylation occurs at asparagine 251. 3 consecutive transmembrane segments (helical) span residues 269-289 (LIQI…SFWL), 298-320 (VALG…AALP), and 330-350 (VYLG…ATVG). At 351–540 (YMAKRIQMRK…TPSDIDKYSR (190 aa)) the chain is on the cytoplasmic side. 2 disordered regions span residues 372-418 (QKKQ…QTVS) and 452-507 (HDPK…GDAE). Over residues 398–412 (HGHGHGHHSHGHPHV) the composition is skewed to basic residues. Residues 475-490 (PVGPHGPGPQGPPGGP) show a composition bias toward pro residues. Gly residues predominate over residues 491–501 (PAGGGGGGAPP). The helical transmembrane segment at 541-561 (IVFPVCFVCFNLMYWIIYLHV) threads the bilayer.

The protein belongs to the ligand-gated ion channel (TC 1.A.9) family. Gamma-aminobutyric acid receptor (TC 1.A.9.5) subfamily. As to quaternary structure, homomultimer.

It is found in the postsynaptic cell membrane. It localises to the cell membrane. Functionally, GABA, an inhibitory neurotransmitter, mediates neuronal inhibition by binding to the GABA receptor and opening an integral chloride channel. The polypeptide is Gamma-aminobutyric acid receptor subunit beta (Musca domestica (House fly)).